The sequence spans 650 residues: Transcription factor LHW (650 aa).

2 disordered regions span residues 381 to 417 and 431 to 470; these read LTKV…SSVY and LKRE…DRQM. Residues 384 to 397 show a composition bias toward low complexity; sequence VSNSSVTTPSHSSP. A Nuclear localization signal motif is present at residues 451–458; that stretch reads NRKRLKPG. Residues 455-504 enclose the bHLH domain; it reads LKPGENPRPRPKDRQMIQDRVKELREIIPNGAKCSIDALLERTIKHMLFL. Positions 456–470 are enriched in basic and acidic residues; that stretch reads KPGENPRPRPKDRQM.

It belongs to the bHLH protein family. LHW subfamily. As to quaternary structure, homodimer. Can also interact with bHLH proteins. Expressed in both root and shoot meristems. Present in root tips.

The protein localises to the nucleus. In terms of biological role, transcription activator that regulates root development; promotes the production of stele cells in roots. Coordinately controls the number of all vascular cell types by regulating the size of the pool of cells from which they arise. The protein is Transcription factor LHW (LHW) of Arabidopsis thaliana (Mouse-ear cress).